Here is a 346-residue protein sequence, read N- to C-terminus: Lysyl aminopeptidase (346 aa).

Residues His63 and Asp177 each contribute to the Zn(2+) site. The Proton acceptor role is filled by Glu207. Zn(2+)-binding residues include Glu208, Asp230, and His314.

Homotetramer. Requires Zn(2+) as cofactor.

It catalyses the reaction Preferentially, release of N-terminal lysine.. Functionally, hydrolyzes di-, tri- and tetrapeptides with a lysine as the N-terminal amino acid and with Gly, Lys, Ala, Phe or Glu in the second position. This is Lysyl aminopeptidase from Pyrococcus furiosus (strain ATCC 43587 / DSM 3638 / JCM 8422 / Vc1).